Reading from the N-terminus, the 197-residue chain is 3-isopropylmalate dehydratase small subunit (197 aa).

It belongs to the LeuD family. LeuD type 1 subfamily. Heterodimer of LeuC and LeuD.

It carries out the reaction (2R,3S)-3-isopropylmalate = (2S)-2-isopropylmalate. The protein operates within amino-acid biosynthesis; L-leucine biosynthesis; L-leucine from 3-methyl-2-oxobutanoate: step 2/4. Catalyzes the isomerization between 2-isopropylmalate and 3-isopropylmalate, via the formation of 2-isopropylmaleate. This Streptococcus suis (strain 98HAH33) protein is 3-isopropylmalate dehydratase small subunit.